The primary structure comprises 106 residues: Large ribosomal subunit protein eL42 (106 aa).

The protein belongs to the eukaryotic ribosomal protein eL42 family.

The polypeptide is Large ribosomal subunit protein eL42 (RPL44) (Schwanniomyces occidentalis (Yeast)).